A 488-amino-acid polypeptide reads, in one-letter code: Mannitol 2-dehydrogenase (488 aa).

An NAD(+)-binding site is contributed by 37-48 (IVHVGVGGFHRA).

The protein belongs to the mannitol dehydrogenase family. Monomer.

It catalyses the reaction D-mannitol + NAD(+) = D-fructose + NADH + H(+). Catalyzes the NAD(H)-dependent interconversion of D-fructose and D-mannitol in the mannitol metabolic pathway. This Aspergillus niger (strain ATCC MYA-4892 / CBS 513.88 / FGSC A1513) protein is Mannitol 2-dehydrogenase.